The chain runs to 199 residues: Transmembrane protein 9B (199 aa).

A signal peptide spans 1-34 (MASLWCGNLLRLGSGLSMSCLALSVLLLAQLTGA). The N-linked (GlcNAc...) asparagine glycan is linked to Asn61. Residues 106 to 126 (IIIYLSILGLLLLYMVYLTLV) form a helical membrane-spanning segment. Phosphoserine is present on residues Ser143 and Ser190.

The protein belongs to the TMEM9 family. In terms of processing, N-glycosylated.

Its subcellular location is the lysosome membrane. It is found in the early endosome membrane. Functionally, enhances production of pro-inflammatory cytokines induced by TNF, IL1B, and TLR ligands. Has a role in TNF activation of both the NF-kappaB and MAPK pathways. This Mus musculus (Mouse) protein is Transmembrane protein 9B (Tmem9b).